A 351-amino-acid chain; its full sequence is Phosphate acyltransferase (351 aa).

Belongs to the PlsX family. In terms of assembly, homodimer. Probably interacts with PlsY.

It is found in the cytoplasm. It carries out the reaction a fatty acyl-[ACP] + phosphate = an acyl phosphate + holo-[ACP]. The protein operates within lipid metabolism; phospholipid metabolism. Functionally, catalyzes the reversible formation of acyl-phosphate (acyl-PO(4)) from acyl-[acyl-carrier-protein] (acyl-ACP). This enzyme utilizes acyl-ACP as fatty acyl donor, but not acyl-CoA. The protein is Phosphate acyltransferase of Gloeothece citriformis (strain PCC 7424) (Cyanothece sp. (strain PCC 7424)).